Here is a 165-residue protein sequence, read N- to C-terminus: Chorismate pyruvate-lyase (165 aa).

The substrate site is built by methionine 35, arginine 77, leucine 115, and glutamate 156.

This sequence belongs to the UbiC family. As to quaternary structure, monomer.

Its subcellular location is the cytoplasm. The catalysed reaction is chorismate = 4-hydroxybenzoate + pyruvate. It functions in the pathway cofactor biosynthesis; ubiquinone biosynthesis. Removes the pyruvyl group from chorismate, with concomitant aromatization of the ring, to provide 4-hydroxybenzoate (4HB) for the ubiquinone pathway. In Shigella boydii serotype 18 (strain CDC 3083-94 / BS512), this protein is Chorismate pyruvate-lyase.